The sequence spans 129 residues: UPF0225 protein XOO0258 (129 aa).

It belongs to the UPF0225 family.

The sequence is that of UPF0225 protein XOO0258 from Xanthomonas oryzae pv. oryzae (strain MAFF 311018).